The chain runs to 269 residues: Thiazole synthase (269 aa).

Lys-109 serves as the catalytic Schiff-base intermediate with DXP. 1-deoxy-D-xylulose 5-phosphate-binding positions include Gly-170, 196–197 (AG), and 218–219 (NT).

This sequence belongs to the ThiG family. Homotetramer. Forms heterodimers with either ThiH or ThiS.

It localises to the plastid. The protein resides in the chloroplast. It carries out the reaction [ThiS sulfur-carrier protein]-C-terminal-Gly-aminoethanethioate + 2-iminoacetate + 1-deoxy-D-xylulose 5-phosphate = [ThiS sulfur-carrier protein]-C-terminal Gly-Gly + 2-[(2R,5Z)-2-carboxy-4-methylthiazol-5(2H)-ylidene]ethyl phosphate + 2 H2O + H(+). It functions in the pathway cofactor biosynthesis; thiamine diphosphate biosynthesis. In terms of biological role, catalyzes the rearrangement of 1-deoxy-D-xylulose 5-phosphate (DXP) to produce the thiazole phosphate moiety of thiamine. Sulfur is provided by the thiocarboxylate moiety of the carrier protein ThiS. In vitro, sulfur can be provided by H(2)S. In Phaeodactylum tricornutum (strain CCAP 1055/1), this protein is Thiazole synthase.